The chain runs to 396 residues: Putative nickel insertion protein (396 aa).

The disordered stretch occupies residues 333–355 (RSKLARESQTVETPDGPAKGKTV).

This sequence belongs to the LarC family.

This chain is Putative nickel insertion protein, found in Rhodopirellula baltica (strain DSM 10527 / NCIMB 13988 / SH1).